Here is a 490-residue protein sequence, read N- to C-terminus: Katanin p60 ATPase-containing subunit A-like 1 (490 aa).

Met1 carries the post-translational modification N-acetylmethionine. The tract at residues 95-184 (DPAVWPPPVP…DGEMPKFDGA (90 aa)) is disordered. Residues 116 to 127 (PNREVRPLRKEM) show a composition bias toward basic and acidic residues. Residues 128-139 (AGVGARGPVGRA) show a composition bias toward low complexity. Positions 143–169 (SKSEKPSTSRDKDCRARGRDDKGRKNM) are enriched in basic and acidic residues. Residue Ser174 is modified to Phosphoserine. Position 248–255 (248–255 (GPPGTGKT)) interacts with ATP.

Belongs to the AAA ATPase family. Katanin p60 subunit A1 subfamily. A-like 1 sub-subfamily. Interacts with KATNB1 and KATNBL1.

Its subcellular location is the cytoplasm. The protein localises to the cytoskeleton. It is found in the spindle pole. It localises to the spindle. The enzyme catalyses n ATP + n H2O + a microtubule = n ADP + n phosphate + (n+1) alpha/beta tubulin heterodimers.. Regulates microtubule dynamics in Sertoli cells, a process that is essential for spermiogenesis and male fertility. Severs microtubules in an ATP-dependent manner, promoting rapid reorganization of cellular microtubule arrays. Has microtubule-severing activity in vitro. In Papio anubis (Olive baboon), this protein is Katanin p60 ATPase-containing subunit A-like 1.